Here is a 429-residue protein sequence, read N- to C-terminus: Xyloglucan O-acetyltransferase 1 (429 aa).

Residues 1–20 (MGSPFKDHHHHHHPFSLAKK) are Cytoplasmic-facing. A helical; Signal-anchor for type II membrane protein membrane pass occupies residues 21–41 (LIPWTFYAMIPLVLFRLYFYP). Over 42 to 429 (YPLHNITTPI…KWDYESRREE (388 aa)) the chain is Lumenal. N-linked (GlcNAc...) asparagine glycans are attached at residues Asn-46 and Asn-89. Disulfide bonds link Cys-72–Cys-122, Cys-93–Cys-158, Cys-102–Cys-402, and Cys-317–Cys-398. The GDS motif motif lies at 145-147 (GDS). Ser-147 (nucleophile) is an active-site residue. 3 N-linked (GlcNAc...) asparagine glycosylation sites follow: Asn-189, Asn-263, and Asn-351. The Proton donor role is filled by Asp-397. The DXXH motif signature appears at 397–400 (DCVH). His-400 functions as the Proton acceptor in the catalytic mechanism.

This sequence belongs to the PC-esterase family. TBL subfamily.

It is found in the golgi apparatus membrane. Xyloglucan acetyltransferase that catalyzes the acetylation of fucosylated Gal residues on xyloglucan side chains. Predominantly catalyze 6-O-monoacetylation of Gal residues in the Fuc-Gal-Xyl trisaccharide side chains of xyloglucan oligomers. This is Xyloglucan O-acetyltransferase 1 from Populus trichocarpa (Western balsam poplar).